The primary structure comprises 240 residues: Protein Thf1 (240 aa).

Residues 186 to 222 adopt a coiled-coil conformation; sequence KDLDLYRSNLEKVDQLLKVLEDAAEAERKKKEKQAAS. Residues 212-240 are disordered; sequence ERKKKEKQAASTTPAIEEAPVTTAESSES.

The protein belongs to the THF1 family.

May be involved in photosynthetic membrane biogenesis. The protein is Protein Thf1 of Synechocystis sp. (strain ATCC 27184 / PCC 6803 / Kazusa).